The primary structure comprises 466 residues: Prophage integrase IntF (466 aa).

The Core-binding (CB) domain occupies 134-239; that stretch reads KTKVTFSVAW…LLRAFIKWSN (106 aa). Positions 268–445 constitute a Tyr recombinase domain; the sequence is KADDCLQKEQ…PLDLLRKWHE (178 aa). Catalysis depends on residues R306, K328, H396, R399, and H422. Catalysis depends on Y432, which acts as the O-(3'-phospho-DNA)-tyrosine intermediate.

Belongs to the 'phage' integrase family.

In terms of biological role, integrase is necessary for integration of the phage into the host genome by site-specific recombination. In conjunction with excisionase, integrase is also necessary for excision of the prophage from the host genome. The protein is Prophage integrase IntF (intF) of Escherichia coli (strain K12).